The sequence spans 263 residues: TLC domain-containing protein 4 (263 aa).

4 consecutive transmembrane segments (helical) span residues 7 to 27 (LLIS…YFVS), 53 to 73 (VVST…FLFD), 90 to 110 (VNIA…ILYW), and 124 to 144 (ASLY…IGNF). The TLC domain maps to 44 to 246 (KKKIEWNSRV…ISKGCIKVIS (203 aa)). K165 carries the N6-acetyllysine modification. A run of 2 helical transmembrane segments spans residues 173–193 (IVIN…ASML) and 211–231 (LGVL…VMNV).

The protein belongs to the TLCD4 family.

The protein resides in the membrane. The protein is TLC domain-containing protein 4 of Homo sapiens (Human).